Here is a 156-residue protein sequence, read N- to C-terminus: Small ribosomal subunit protein uS7 (156 aa).

It belongs to the universal ribosomal protein uS7 family. In terms of assembly, part of the 30S ribosomal subunit. Contacts proteins S9 and S11.

Its function is as follows. One of the primary rRNA binding proteins, it binds directly to 16S rRNA where it nucleates assembly of the head domain of the 30S subunit. Is located at the subunit interface close to the decoding center, probably blocks exit of the E-site tRNA. The sequence is that of Small ribosomal subunit protein uS7 from Mycobacterium sp. (strain JLS).